The sequence spans 343 residues: Phosphate acyltransferase (343 aa).

This sequence belongs to the PlsX family. In terms of assembly, homodimer. Probably interacts with PlsY.

The protein localises to the cytoplasm. It catalyses the reaction a fatty acyl-[ACP] + phosphate = an acyl phosphate + holo-[ACP]. It participates in lipid metabolism; phospholipid metabolism. Catalyzes the reversible formation of acyl-phosphate (acyl-PO(4)) from acyl-[acyl-carrier-protein] (acyl-ACP). This enzyme utilizes acyl-ACP as fatty acyl donor, but not acyl-CoA. The chain is Phosphate acyltransferase from Neorickettsia sennetsu (strain ATCC VR-367 / Miyayama) (Ehrlichia sennetsu).